The following is a 454-amino-acid chain: tRNA modification GTPase MnmE (454 aa).

(6S)-5-formyl-5,6,7,8-tetrahydrofolate contacts are provided by arginine 23, glutamate 80, and lysine 120. The 162-residue stretch at 216–377 (GMKVVIAGRP…LRNHLKQSMG (162 aa)) folds into the TrmE-type G domain. Asparagine 226 contributes to the K(+) binding site. Residues 226-231 (NAGKSS), 245-251 (TDIAGTT), 270-273 (DTAG), and 335-338 (NKAD) contribute to the GTP site. Position 230 (serine 230) interacts with Mg(2+). Threonine 245, isoleucine 247, and threonine 250 together coordinate K(+). Residue threonine 251 participates in Mg(2+) binding. Lysine 454 contacts (6S)-5-formyl-5,6,7,8-tetrahydrofolate.

The protein belongs to the TRAFAC class TrmE-Era-EngA-EngB-Septin-like GTPase superfamily. TrmE GTPase family. Homodimer. Heterotetramer of two MnmE and two MnmG subunits. K(+) serves as cofactor.

The protein localises to the cytoplasm. Functionally, exhibits a very high intrinsic GTPase hydrolysis rate. Involved in the addition of a carboxymethylaminomethyl (cmnm) group at the wobble position (U34) of certain tRNAs, forming tRNA-cmnm(5)s(2)U34. The polypeptide is tRNA modification GTPase MnmE (Escherichia coli O157:H7).